The sequence spans 223 residues: Neurotrophic factor BDNF precursor form (223 aa).

Residues 1–5 (SCMKA) form the signal peptide. A propeptide spanning residues 6 to 114 (APMKEVSIRG…AANMSMRVRR (109 aa)) is cleaved from the precursor. N-linked (GlcNAc...) asparagine glycosylation occurs at asparagine 107. 2 cysteine pairs are disulfide-bonded: cysteine 127-cysteine 194 and cysteine 172-cysteine 223.

This sequence belongs to the NGF-beta family.

The protein resides in the secreted. In terms of biological role, promotes the survival of neuronal populations that are all located either in the central nervous system or directly connected to it. The sequence is that of Neurotrophic factor BDNF precursor form (BDNF) from Chilabothrus striatus (Haitian boa constrictor).